The primary structure comprises 260 residues: tRNA pseudouridine synthase C (260 aa).

Asp-54 is a catalytic residue.

Belongs to the pseudouridine synthase RluA family.

The catalysed reaction is uridine(65) in tRNA = pseudouridine(65) in tRNA. Functionally, responsible for synthesis of pseudouridine from uracil-65 in transfer RNAs. The polypeptide is tRNA pseudouridine synthase C (truC) (Escherichia coli O6:H1 (strain CFT073 / ATCC 700928 / UPEC)).